The following is a 212-amino-acid chain: Cyclin-dependent kinase 2-interacting protein (212 aa).

At Met-1 the chain carries N-acetylmethionine. A phosphoserine mark is found at Ser-69 and Ser-73. A coiled-coil region spans residues 73–107 (SKENEEKVCLEYNEELEKLCEELQATLDGLTKIQV). A Na(+)-binding site is contributed by Ser-202.

The protein belongs to the CINP family. As to quaternary structure, homodimer. Part of the 55LCC heterohexameric ATPase complex composed at least of AIRIM, AFG2A, AFG2B and CINP. Interacts with AIRIM. Interacts with CDK2 and CDC7. Interacts with the components of the replication complex, MCM2, MCM3, MCM4, MCM5, MCM6, MCM7 and with ORC2-containing complexes. Interacts with ATRIP. Interacts with CEP152. Associates with pre-60S ribosomal particles. Post-translationally, phosphorylated by CDC7 but not by CDK2.

Its subcellular location is the nucleus. Functionally, component of the DNA replication complex, which interacts with two kinases, CDK2 and CDC7, thereby providing a functional and physical link between CDK2 and CDC7 during firing of the origins of replication. Regulates ATR-mediated checkpoint signaling in response to DNA damage. Part of the 55LCC heterohexameric ATPase complex which is chromatin-associated and promotes replisome proteostasis to maintain replication fork progression and genome stability. Required for replication fork progression, sister chromatid cohesion, and chromosome stability. The ATPase activity is specifically enhanced by replication fork DNA and is coupled to cysteine protease-dependent cleavage of replisome substrates in response to replication fork damage. Uses ATPase activity to process replisome substrates in S-phase, facilitating their proteolytic turnover from chromatin to ensure DNA replication and mitotic fidelity. As part of 55LCC complex, also involved in the cytoplasmic maturation steps of pre-60S ribosomal particles by promoting the release of shuttling protein RSL24D1/RLP24 from the pre-ribosomal particles. This Homo sapiens (Human) protein is Cyclin-dependent kinase 2-interacting protein.